The primary structure comprises 38 residues: Large ribosomal subunit protein bL36 (38 aa).

This sequence belongs to the bacterial ribosomal protein bL36 family.

This Buchnera aphidicola subsp. Acyrthosiphon pisum (strain 5A) protein is Large ribosomal subunit protein bL36.